Consider the following 142-residue polypeptide: 3-hydroxyacyl-[acyl-carrier-protein] dehydratase FabZ (142 aa).

Histidine 48 is an active-site residue.

This sequence belongs to the thioester dehydratase family. FabZ subfamily.

It localises to the cytoplasm. The enzyme catalyses a (3R)-hydroxyacyl-[ACP] = a (2E)-enoyl-[ACP] + H2O. Functionally, involved in unsaturated fatty acids biosynthesis. Catalyzes the dehydration of short chain beta-hydroxyacyl-ACPs and long chain saturated and unsaturated beta-hydroxyacyl-ACPs. This chain is 3-hydroxyacyl-[acyl-carrier-protein] dehydratase FabZ, found in Desulforamulus reducens (strain ATCC BAA-1160 / DSM 100696 / MI-1) (Desulfotomaculum reducens).